Reading from the N-terminus, the 184-residue chain is Ribosome maturation factor RimM (184 aa).

Residues 104–184 form the PRC barrel domain; that stretch reads SEDEFYWREL…RIEVDWDPGF (81 aa).

This sequence belongs to the RimM family. In terms of assembly, binds ribosomal protein uS19.

It is found in the cytoplasm. An accessory protein needed during the final step in the assembly of 30S ribosomal subunit, possibly for assembly of the head region. Essential for efficient processing of 16S rRNA. May be needed both before and after RbfA during the maturation of 16S rRNA. It has affinity for free ribosomal 30S subunits but not for 70S ribosomes. The sequence is that of Ribosome maturation factor RimM from Vibrio atlanticus (strain LGP32) (Vibrio splendidus (strain Mel32)).